The sequence spans 244 residues: Isoprenyl transferase (244 aa).

Residue Asp20 is part of the active site. Asp20 serves as a coordination point for Mg(2+). Residues 21 to 24 (GNGR), Trp25, Arg33, His37, and 65 to 67 (SSE) each bind substrate. Asn68 acts as the Proton acceptor in catalysis. Substrate-binding positions include Trp69, Arg71, Arg188, and 194 to 196 (RIS). Glu207 lines the Mg(2+) pocket.

Belongs to the UPP synthase family. As to quaternary structure, homodimer. Requires Mg(2+) as cofactor.

Catalyzes the condensation of isopentenyl diphosphate (IPP) with allylic pyrophosphates generating different type of terpenoids. The protein is Isoprenyl transferase of Rhodopirellula baltica (strain DSM 10527 / NCIMB 13988 / SH1).